A 432-amino-acid polypeptide reads, in one-letter code: Gamma-glutamyl phosphate reductase (432 aa).

The protein belongs to the gamma-glutamyl phosphate reductase family.

The protein resides in the cytoplasm. It catalyses the reaction L-glutamate 5-semialdehyde + phosphate + NADP(+) = L-glutamyl 5-phosphate + NADPH + H(+). It participates in amino-acid biosynthesis; L-proline biosynthesis; L-glutamate 5-semialdehyde from L-glutamate: step 2/2. Catalyzes the NADPH-dependent reduction of L-glutamate 5-phosphate into L-glutamate 5-semialdehyde and phosphate. The product spontaneously undergoes cyclization to form 1-pyrroline-5-carboxylate. The sequence is that of Gamma-glutamyl phosphate reductase from Methylorubrum extorquens (strain PA1) (Methylobacterium extorquens).